A 507-amino-acid chain; its full sequence is Cobyric acid synthase (507 aa).

A GATase cobBQ-type domain is found at 249 to 451; sequence DIEIAVINLP…IHGIFENREF (203 aa). Cys-330 serves as the catalytic Nucleophile. Residue His-443 is part of the active site.

The protein belongs to the CobB/CobQ family. CobQ subfamily.

The protein operates within cofactor biosynthesis; adenosylcobalamin biosynthesis. Catalyzes amidations at positions B, D, E, and G on adenosylcobyrinic A,C-diamide. NH(2) groups are provided by glutamine, and one molecule of ATP is hydrogenolyzed for each amidation. The polypeptide is Cobyric acid synthase (Thermoanaerobacter sp. (strain X514)).